A 355-amino-acid polypeptide reads, in one-letter code: Probable poly-beta-1,6-N-acetyl-D-glucosamine export protein (355 aa).

10 helical membrane passes run 13 to 30 (AFIC…QITL), 45 to 67 (YIRN…LTTL), 74 to 96 (INYL…LFYS), 116 to 138 (VLGQ…SYII), 145 to 167 (LFNS…HYFL), 187 to 204 (MILG…IGYN), 211 to 233 (FLEK…FIAV), 243 to 262 (SFTY…LLGV), 269 to 291 (MLLN…HPII), and 306 to 328 (TIVF…GMML).

This sequence belongs to the acyltransferase 3 family.

It localises to the cell membrane. Presumably involved in the export of the biofilm adhesin polysaccharide poly-beta-1,6-N-acetyl-D-glucosamine (PNAG, also referred to as PIA) across the cell membrane. This chain is Probable poly-beta-1,6-N-acetyl-D-glucosamine export protein (icaC), found in Staphylococcus epidermidis.